Here is an 83-residue protein sequence, read N- to C-terminus: Protein MATERNALLY EXPRESSED GENE 3 (83 aa).

The first 22 residues, 1–22 (MQWLAFVAPRWRCVCDQELSAQ), serve as a signal peptide directing secretion. C60 and C82 are disulfide-bonded.

Belongs to the MEG family. As to expression, expressed in endosperm, anther and pollen.

In Zea mays (Maize), this protein is Protein MATERNALLY EXPRESSED GENE 3 (MEG3).